Consider the following 159-residue polypeptide: Ribosomal RNA large subunit methyltransferase H (159 aa).

S-adenosyl-L-methionine is bound by residues Leu-76, Gly-108, and 127–132; that span reads FGLLTL.

The protein belongs to the RNA methyltransferase RlmH family. As to quaternary structure, homodimer.

The protein resides in the cytoplasm. It carries out the reaction pseudouridine(1915) in 23S rRNA + S-adenosyl-L-methionine = N(3)-methylpseudouridine(1915) in 23S rRNA + S-adenosyl-L-homocysteine + H(+). In terms of biological role, specifically methylates the pseudouridine at position 1915 (m3Psi1915) in 23S rRNA. The sequence is that of Ribosomal RNA large subunit methyltransferase H from Streptococcus pyogenes serotype M5 (strain Manfredo).